The chain runs to 663 residues: Subtilisin-like serine protease (663 aa).

The signal sequence occupies residues 1-23 (MKKFGAVVLALFLVGLMAGSVLA). A propeptide spans 24–136 (APQKPAVRNV…IQEDYVVKVA (113 aa)) (removed in mature form). Residues 139-439 (TEGLDESAAQ…AGRVNAYKAA (301 aa)) enclose the Peptidase S8 domain. Active-site charge relay system residues include aspartate 170, histidine 203, and serine 382. Ca(2+)-binding residues include proline 420, isoleucine 423, aspartate 483, leucine 484, aspartate 485, aspartate 497, tyrosine 498, threonine 501, and glutamate 507. Positions 537–565 (VSDGSLGQPSGGGSEPSPSPSPEPTVDEK) are disordered. Residues 563–663 (DEKTFTGTVH…YQLDAKVYYG (101 aa)) constitute a propeptide, removed in mature form.

Belongs to the peptidase S8 family. In terms of assembly, monomer.

The catalysed reaction is Hydrolysis of proteins with broad specificity for peptide bonds, and a preference for a large uncharged residue in P1. Hydrolyzes peptide amides.. Resistant to treatment with 5% SDS, 8 M urea, 10% Triton X-100 or 10% Tween-20. Fully active although less stable in the presence of 10 mM EDTA. Activity not affected by the absence or presence of 10 mM CaCl(2). Unstable in the presence of 2 M or over GdnHCl and loses 35% and 99% of its activity upon incubation with 2 and 4 M GdnHCl, respectively, for 1 hour at 55 degrees Celsius. Nearly fully loses activity upon incubation at pH 2.0. Its function is as follows. Serine protease with a broad substrate specificity. This chain is Subtilisin-like serine protease, found in Thermococcus kodakarensis (strain ATCC BAA-918 / JCM 12380 / KOD1) (Pyrococcus kodakaraensis (strain KOD1)).